A 1210-amino-acid chain; its full sequence is uncharacterized protein (1210 aa).

The protein to E.coli molybdate metabolism regulator (MolR).

This is an uncharacterized protein from Escherichia coli (strain K12).